A 2556-amino-acid chain; its full sequence is Ubiquitin carboxyl-terminal hydrolase 9Y (2556 aa).

Positions 1–33 (MTITTRGSPVGENESQGQTSDGQPQPSFQQNQI) are enriched in polar residues. The disordered stretch occupies residues 1–68 (MTITTRGSPV…QHEEEDPSFP (68 aa)). A compositionally biased stretch (low complexity) spans 34 to 44 (SSSDSSNETSP). Residue serine 587 is modified to Phosphoserine. Threonine 589 is subject to Phosphothreonine. The interval 971-999 (NMPSSPDSSSDSSAGPPGNHSHNNYRDVS) is disordered. A compositionally biased stretch (low complexity) spans 973–983 (PSSPDSSSDSS). In terms of domain architecture, USP spans 1559–1958 (VGLKNAGATC…NAYILFYERM (400 aa)). Cysteine 1568 (nucleophile) is an active-site residue. Residues cysteine 1729, histidine 1731, cysteine 1773, and cysteine 1776 each coordinate Zn(2+). Histidine 1881 serves as the catalytic Proton acceptor. Serine 2447 bears the Phosphoserine mark. The interval 2513–2556 (QNYVPEQPFSGPASHHLNNPQKNDKPQETHESNEEISSCLIKDQ) is disordered. Residues 2534-2545 (KNDKPQETHESN) are compositionally biased toward basic and acidic residues. Serine 2549 bears the Phosphoserine mark.

It belongs to the peptidase C19 family.

It carries out the reaction Thiol-dependent hydrolysis of ester, thioester, amide, peptide and isopeptide bonds formed by the C-terminal Gly of ubiquitin (a 76-residue protein attached to proteins as an intracellular targeting signal).. Its pathway is protein modification; protein ubiquitination. Functionally, deubiquitinase that mediates deubiquitination of target proteins. May stabilize target proteins that are important for male germ cell development. The polypeptide is Ubiquitin carboxyl-terminal hydrolase 9Y (Mus musculus (Mouse)).